Reading from the N-terminus, the 408-residue chain is BRCA1-A complex subunit Abraxas 1 (408 aa).

One can recognise an MPN domain in the interval 7–155 (TAVMSGFVFG…KSTHRLEYAL (149 aa)). A coiled-coil region spans residues 210–273 (ALAEVNRISN…EETGNKVSEA (64 aa)). A compositionally biased stretch (polar residues) spans 360–372 (LQLQKQHSQNGDS). A disordered region spans residues 360-408 (LQLQKQHSQNGDSEGSDSERPLCNSGTETDGDILESLHMDVSRSKSPIF). Phosphoserine is present on S405. The short motif at 405 to 408 (SPIF) is the pSXXF motif element.

It belongs to the FAM175 family. Abraxas subfamily. As to quaternary structure, component of the BRCA1-A complex. Component of the BRISC complex. Interacts directly (when phosphorylated at Ser-405) with brca1. Homodimer. The phosphorylated homodimer can interact directly with two brca1 chains, giving rise to a heterotetramer. Post-translationally, phosphorylation of Ser-405 of the pSXXF motif by ATM or ATR constitutes a specific recognition motif for the BRCT domain of BRCA1.

It localises to the nucleus. Functionally, involved in DNA damage response and double-strand break (DSB) repair. Component of the BRCA1-A complex, acting as a central scaffold protein that assembles the various components of the complex and mediates the recruitment of brca1. The BRCA1-A complex specifically recognizes 'Lys-63'-linked ubiquitinated histones H2A and H2AX at DNA lesion sites, leading to target the brca1-bard1 heterodimer to sites of DNA damage at DSBs. This complex also possesses deubiquitinase activity that specifically removes 'Lys-63'-linked ubiquitin on histones H2A and H2AX. This Xenopus tropicalis (Western clawed frog) protein is BRCA1-A complex subunit Abraxas 1.